Here is a 422-residue protein sequence, read N- to C-terminus: Dihydroorotase (422 aa).

The Zn(2+) site is built by H59 and H61. Residues 61–63 (HFR) and N93 each bind substrate. Positions 150, 177, and 230 each coordinate Zn(2+). N276 serves as a coordination point for substrate. Residue D303 participates in Zn(2+) binding. The active site involves D303. H307 is a binding site for substrate.

It belongs to the metallo-dependent hydrolases superfamily. DHOase family. Class I DHOase subfamily. Zn(2+) serves as cofactor.

It carries out the reaction (S)-dihydroorotate + H2O = N-carbamoyl-L-aspartate + H(+). Its pathway is pyrimidine metabolism; UMP biosynthesis via de novo pathway; (S)-dihydroorotate from bicarbonate: step 3/3. In terms of biological role, catalyzes the reversible cyclization of carbamoyl aspartate to dihydroorotate. This Streptococcus pneumoniae serotype 4 (strain ATCC BAA-334 / TIGR4) protein is Dihydroorotase.